The chain runs to 21 residues: Ocellatin-3 (21 aa).

Ile21 is subject to Isoleucine amide.

As to expression, expressed by the skin dorsal glands.

It is found in the secreted. In terms of biological role, has hemolytic activity against human erythrocytes and antibacterial activity against the Gram-negative bacterium E.coli. The chain is Ocellatin-3 from Leptodactylus ocellatus (Argus frog).